A 369-amino-acid chain; its full sequence is Zeaxanthin 7,8(7',8')-cleavage dioxygenase, chromoplastic (369 aa).

Positions 62, 112, 177, and 356 each coordinate Fe cation.

The protein belongs to the carotenoid oxygenase family. It depends on Fe(2+) as a cofactor. In the style branches.

It localises to the plastid. The protein resides in the chromoplast. It catalyses the reaction all-trans-zeaxanthin + 2 O2 = crocetin dialdehyde + 2 3beta-hydroxy-beta-cyclocitral. Functionally, cleaves zeaxanthin symmetrically at the 7-8 and 7'-8' double bonds to produce crocetin dialdehyde and hydroxy-beta-cyclocitral, two water-soluble precursors sequestred in vacuoles and involved in the synthesis of saffron pigment and aroma. In Crocus sativus (Saffron), this protein is Zeaxanthin 7,8(7',8')-cleavage dioxygenase, chromoplastic (ZCD).